The sequence spans 197 residues: Putative peptidyl-prolyl cis-trans isomerase (197 aa).

One can recognise a PPIase cyclophilin-type domain in the interval 14–195; the sequence is GEIKVVMHTN…HDVVIESIDV (182 aa).

This sequence belongs to the cyclophilin-type PPIase family.

The catalysed reaction is [protein]-peptidylproline (omega=180) = [protein]-peptidylproline (omega=0). PPIases accelerate the folding of proteins. It catalyzes the cis-trans isomerization of proline imidic peptide bonds in oligopeptides. This chain is Putative peptidyl-prolyl cis-trans isomerase, found in Staphylococcus aureus (strain bovine RF122 / ET3-1).